The following is a 407-amino-acid chain: Elongation factor Tu (407 aa).

Residues 10–217 (KPHVNVGTIG…TLDTYIPDPE (208 aa)) form the tr-type G domain. The segment at 19–26 (GHVDHGKT) is G1. 19–26 (GHVDHGKT) lines the GTP pocket. Threonine 26 contacts Mg(2+). Residues 60 to 64 (GITIS) are G2. Residues 81 to 84 (DCPG) are G3. Residues 81 to 85 (DCPGH) and 136 to 139 (NKSD) each bind GTP. The G4 stretch occupies residues 136–139 (NKSD). Residues 184–186 (SAL) form a G5 region.

Belongs to the TRAFAC class translation factor GTPase superfamily. Classic translation factor GTPase family. EF-Tu/EF-1A subfamily. As to quaternary structure, monomer.

It localises to the cytoplasm. The catalysed reaction is GTP + H2O = GDP + phosphate + H(+). Its function is as follows. GTP hydrolase that promotes the GTP-dependent binding of aminoacyl-tRNA to the A-site of ribosomes during protein biosynthesis. The chain is Elongation factor Tu from Marinomonas sp. (strain MWYL1).